A 244-amino-acid polypeptide reads, in one-letter code: MSDTPQSPAQDSLAEHDEARPMRTVKSFVMRAGRMTEGQQRGLDLGWPKFGLELSDEVQDFDAIFGRQAPRTFEIGFGMGHSTLEMAAAAPDIDFIGVEVHKPGVGALLNGLLTQGLGNVRVYSCDALEVLRHCVADASLDRLLLFFPDPWHKKRHHKRRIVQPEFAELVRRKLKVGGVLHMATDWEPYAEHMLDVMSAAPGYRNQAEDGRFVPRPQERPVTKFERRGERLGHGVWDLKFERVD.

Over residues 1 to 10 the composition is skewed to polar residues; it reads MSDTPQSPAQ. The segment at 1 to 20 is disordered; that stretch reads MSDTPQSPAQDSLAEHDEAR. S-adenosyl-L-methionine is bound by residues Glu-74, Glu-99, Asp-126, and Asp-149. Residue Asp-149 is part of the active site. Substrate contacts are provided by residues Lys-153, Asp-185, and 222–225; that span reads TKFE.

This sequence belongs to the class I-like SAM-binding methyltransferase superfamily. TrmB family.

The catalysed reaction is guanosine(46) in tRNA + S-adenosyl-L-methionine = N(7)-methylguanosine(46) in tRNA + S-adenosyl-L-homocysteine. The protein operates within tRNA modification; N(7)-methylguanine-tRNA biosynthesis. Catalyzes the formation of N(7)-methylguanine at position 46 (m7G46) in tRNA. This chain is tRNA (guanine-N(7)-)-methyltransferase, found in Pseudomonas aeruginosa (strain ATCC 15692 / DSM 22644 / CIP 104116 / JCM 14847 / LMG 12228 / 1C / PRS 101 / PAO1).